The following is a 503-amino-acid chain: ATP synthase subunit alpha (503 aa).

Residue 171-178 (DRQTGKTA) participates in ATP binding.

The protein belongs to the ATPase alpha/beta chains family. In terms of assembly, F-type ATPases have 2 components, CF(1) - the catalytic core - and CF(0) - the membrane proton channel. CF(1) has five subunits: alpha(3), beta(3), gamma(1), delta(1), epsilon(1). CF(0) has four main subunits: a(1), b(1), b'(1) and c(9-12).

The protein localises to the cellular thylakoid membrane. The enzyme catalyses ATP + H2O + 4 H(+)(in) = ADP + phosphate + 5 H(+)(out). Produces ATP from ADP in the presence of a proton gradient across the membrane. The alpha chain is a regulatory subunit. The chain is ATP synthase subunit alpha from Synechococcus sp. (strain PCC 6716).